A 126-amino-acid polypeptide reads, in one-letter code: Large ribosomal subunit protein bL12 (126 aa).

The protein belongs to the bacterial ribosomal protein bL12 family. As to quaternary structure, homodimer. Part of the ribosomal stalk of the 50S ribosomal subunit. Forms a multimeric L10(L12)X complex, where L10 forms an elongated spine to which 2 to 4 L12 dimers bind in a sequential fashion. Binds GTP-bound translation factors.

Forms part of the ribosomal stalk which helps the ribosome interact with GTP-bound translation factors. Is thus essential for accurate translation. The protein is Large ribosomal subunit protein bL12 of Methylorubrum populi (strain ATCC BAA-705 / NCIMB 13946 / BJ001) (Methylobacterium populi).